Consider the following 706-residue polypeptide: Choline transporter-like protein 2 (706 aa).

The Cytoplasmic segment spans residues 1–33; it reads MGGERQHYYGKHGTPQKYDPTFKGPIYHRGCTD. At Thr14 the chain carries Phosphothreonine. The helical transmembrane segment at 34-54 threads the bilayer; that stretch reads VICCVFLLLAIVGYVAVGIIA. At 55–232 the chain is on the extracellular side; the sequence is WTHGDPRKVI…RIFEDYTVSW (178 aa). N-linked (GlcNAc...) asparagine glycans are attached at residues Asn187 and Asn200. Residues 233 to 253 form a helical membrane-spanning segment; that stretch reads YWIIIGLVIAMVLSLLFIILL. Over 254 to 256 the chain is Cytoplasmic; it reads RFL. Residues 257 to 277 form a helical membrane-spanning segment; that stretch reads AGIMVWVMIVMVILVLGYGIF. At 278–315 the chain is on the extracellular side; that stretch reads HCYMEYSRLRGEAGSDISLVDLGFQTDLRVYLHLRQTW. Residues 316–336 traverse the membrane as a helical segment; the sequence is MAFMIILSILEVIIILLLIFL. Over 337–364 the chain is Cytoplasmic; the sequence is RKRILIAIALIKEASRAVGYVMCSMLYP. Residues 365–385 traverse the membrane as a helical segment; that stretch reads LVTFLLLCLCIAYWASTAIFL. The Extracellular segment spans residues 386-440; that stretch reads STSNEAVYKIFSDTDCQAVGKTCNPENFSSSSEFHLCPGAHCQFAFYGGESTYHR. The helical transmembrane segment at 441–461 threads the bilayer; the sequence is ALLGLQIFNAFMFFWLANFVL. Topologically, residues 462–504 are cytoplasmic; it reads ALGQVTLAGAFASYYWALKKPDDLPAFPLFSAFGRALRYHTGS. Residues 505 to 525 form a helical membrane-spanning segment; it reads LAFGSLLLAIVQIIRVMLEYL. Topologically, residues 526 to 563 are extracellular; that stretch reads DQRLKAAENKFAKFLMTCLKCCFWCLEKFIKFLNRNAY. Residues 564 to 584 traverse the membrane as a helical segment; the sequence is IMIAIYGTNFCTSARNAFFLL. Over 585–599 the chain is Cytoplasmic; the sequence is MRNIIRVAVLDKVTD. A helical membrane pass occupies residues 600-620; it reads FLFLLGKLLIVGSVGILAFFF. Over 621 to 638 the chain is Extracellular; that stretch reads FTHRIRIVQDTAPPLNYY. A helical transmembrane segment spans residues 639-659; sequence WVPILTVIVGSYLIAHGFFSV. Residues 660 to 706 lie on the Cytoplasmic side of the membrane; the sequence is YGMCVDTLFLCFLEDLERNDGSMERPYFMSPTLKRLLNKTNRKPAES.

Belongs to the CTL (choline transporter-like) family. Interacts with COCH. Post-translationally, N-glycosylated.

The protein resides in the cell membrane. It is found in the mitochondrion outer membrane. It carries out the reaction choline(out) + n H(+)(in) = choline(in) + n H(+)(out). It catalyses the reaction ethanolamine(out) + n H(+)(in) = ethanolamine(in) + n H(+)(out). Choline/H+ antiporter, mainly in mitochodria. Also acts as a low-affinity ethanolamine/H+ antiporter, regulating the supply of extracellular ethanolamine (Etn) for the CDP-Etn pathway, redistribute intracellular Etn and balance the CDP-Cho and CDP-Etn arms of the Kennedy pathway. This Sus scrofa (Pig) protein is Choline transporter-like protein 2 (SLC44A2).